The sequence spans 160 residues: MKNTVNDKILLTQQKLEEIEKELEHLINVERVNVIQEIKDARSQGDLSENAEYDVAREKQGIIESRIRELETIISKAKIIKADLGSSRVSIGSKVSLENVESGEIQTFQIVSSIDADPFKSKISNFSPIAQALLGQHQGDEVEVDVNEKYSVRILEVINE.

Residues 2–84 (KNTVNDKILL…SKAKIIKADL (83 aa)) are a coiled coil.

The protein belongs to the GreA/GreB family.

Functionally, necessary for efficient RNA polymerase transcription elongation past template-encoded arresting sites. The arresting sites in DNA have the property of trapping a certain fraction of elongating RNA polymerases that pass through, resulting in locked ternary complexes. Cleavage of the nascent transcript by cleavage factors such as GreA or GreB allows the resumption of elongation from the new 3'terminus. GreA releases sequences of 2 to 3 nucleotides. In Mesomycoplasma hyopneumoniae (strain 232) (Mycoplasma hyopneumoniae), this protein is Transcription elongation factor GreA.